Consider the following 97-residue polypeptide: uncharacterized protein (97 aa).

A disordered region spans residues 38-97 (TSPPDWNKFSGKVSINEPTTSKSKSKSTSTSTSTSTSTSTSTSTSSSTSSTSSTTSSINK). Over residues 56–97 (TTSKSKSKSTSTSTSTSTSTSTSTSTSSSTSSTSSTTSSINK) the composition is skewed to low complexity.

This is an uncharacterized protein from Dictyostelium discoideum (Social amoeba).